A 235-amino-acid chain; its full sequence is tRNA (guanine-N(1)-)-methyltransferase (235 aa).

Residues glycine 114 and 134-139 (IGDYIL) contribute to the S-adenosyl-L-methionine site.

Belongs to the RNA methyltransferase TrmD family. In terms of assembly, homodimer.

The protein localises to the cytoplasm. The enzyme catalyses guanosine(37) in tRNA + S-adenosyl-L-methionine = N(1)-methylguanosine(37) in tRNA + S-adenosyl-L-homocysteine + H(+). Its function is as follows. Specifically methylates guanosine-37 in various tRNAs. The sequence is that of tRNA (guanine-N(1)-)-methyltransferase from Ehrlichia canis (strain Jake).